The sequence spans 290 residues: Putative phosphoenolpyruvate synthase regulatory protein (290 aa).

170 to 177 contributes to the ADP binding site; sequence GVSRCGKT.

The protein belongs to the pyruvate, phosphate/water dikinase regulatory protein family. PSRP subfamily.

It catalyses the reaction [pyruvate, water dikinase] + ADP = [pyruvate, water dikinase]-phosphate + AMP + H(+). It carries out the reaction [pyruvate, water dikinase]-phosphate + phosphate + H(+) = [pyruvate, water dikinase] + diphosphate. Its function is as follows. Bifunctional serine/threonine kinase and phosphorylase involved in the regulation of the phosphoenolpyruvate synthase (PEPS) by catalyzing its phosphorylation/dephosphorylation. This Enterobacter agglomerans (Erwinia herbicola) protein is Putative phosphoenolpyruvate synthase regulatory protein (ydiA).